Reading from the N-terminus, the 509-residue chain is 2,3-bisphosphoglycerate-independent phosphoglycerate mutase (509 aa).

Mn(2+) is bound at residue D11. Y35 is subject to Phosphotyrosine. S61 serves as a coordination point for Mn(2+). Residue S61 is the Phosphoserine intermediate of the active site. Substrate is bound by residues H122, R152–D153, R184, R190, R260–R263, and K335. Positions 402, 406, 443, 444, and 461 each coordinate Mn(2+).

This sequence belongs to the BPG-independent phosphoglycerate mutase family. As to quaternary structure, monomer. Mn(2+) is required as a cofactor.

The catalysed reaction is (2R)-2-phosphoglycerate = (2R)-3-phosphoglycerate. It participates in carbohydrate degradation; glycolysis; pyruvate from D-glyceraldehyde 3-phosphate: step 3/5. In terms of biological role, essential for rapid growth and for sporulation. Catalyzes the interconversion of 2-phosphoglycerate and 3-phosphoglycerate. The sequence is that of 2,3-bisphosphoglycerate-independent phosphoglycerate mutase from Bacillus thuringiensis (strain Al Hakam).